Here is a 307-residue protein sequence, read N- to C-terminus: Probable porphobilinogen deaminase (307 aa).

Cysteine 240 bears the S-(dipyrrolylmethanemethyl)cysteine mark.

It belongs to the HMBS family. It depends on dipyrromethane as a cofactor.

The catalysed reaction is 4 porphobilinogen + H2O = hydroxymethylbilane + 4 NH4(+). The protein operates within porphyrin-containing compound metabolism; protoporphyrin-IX biosynthesis; coproporphyrinogen-III from 5-aminolevulinate: step 2/4. Its function is as follows. Tetrapolymerization of the monopyrrole PBG into the hydroxymethylbilane pre-uroporphyrinogen in several discrete steps. This chain is Probable porphobilinogen deaminase (hemC), found in Aeropyrum pernix (strain ATCC 700893 / DSM 11879 / JCM 9820 / NBRC 100138 / K1).